The primary structure comprises 361 residues: Protein RecA (361 aa).

77–84 (GPESSGKT) provides a ligand contact to ATP.

The protein belongs to the RecA family.

It is found in the cytoplasm. Its function is as follows. Can catalyze the hydrolysis of ATP in the presence of single-stranded DNA, the ATP-dependent uptake of single-stranded DNA by duplex DNA, and the ATP-dependent hybridization of homologous single-stranded DNAs. It interacts with LexA causing its activation and leading to its autocatalytic cleavage. In Sinorhizobium medicae (strain WSM419) (Ensifer medicae), this protein is Protein RecA.